The chain runs to 485 residues: Glutamyl-tRNA(Gln) amidotransferase subunit A (485 aa).

Active-site charge relay system residues include Lys-78 and Ser-153. Catalysis depends on Ser-177, which acts as the Acyl-ester intermediate.

Belongs to the amidase family. GatA subfamily. In terms of assembly, heterotrimer of A, B and C subunits.

It catalyses the reaction L-glutamyl-tRNA(Gln) + L-glutamine + ATP + H2O = L-glutaminyl-tRNA(Gln) + L-glutamate + ADP + phosphate + H(+). In terms of biological role, allows the formation of correctly charged Gln-tRNA(Gln) through the transamidation of misacylated Glu-tRNA(Gln) in organisms which lack glutaminyl-tRNA synthetase. The reaction takes place in the presence of glutamine and ATP through an activated gamma-phospho-Glu-tRNA(Gln). The polypeptide is Glutamyl-tRNA(Gln) amidotransferase subunit A (Bacillus cereus (strain ATCC 14579 / DSM 31 / CCUG 7414 / JCM 2152 / NBRC 15305 / NCIMB 9373 / NCTC 2599 / NRRL B-3711)).